The primary structure comprises 68 residues: MADMKSDDIRAMSEDQMDEAILGLKKERFNLRFQRATGQLENTSRLREARREIARIKTIAAQKRAAKK.

Belongs to the universal ribosomal protein uL29 family.

The sequence is that of Large ribosomal subunit protein uL29 from Rhodopseudomonas palustris (strain BisA53).